A 133-amino-acid polypeptide reads, in one-letter code: Small ribosomal subunit protein bS6 (133 aa).

Belongs to the bacterial ribosomal protein bS6 family.

Its function is as follows. Binds together with bS18 to 16S ribosomal RNA. In Borrelia turicatae (strain 91E135), this protein is Small ribosomal subunit protein bS6.